Consider the following 86-residue polypeptide: OMEGA-stichotoxin-Shd4a (86 aa).

The N-terminal stretch at 1 to 23 (MASFRTLFACVVILCCVLWSSMA) is a signal peptide. Positions 24 to 36 (RYGEDMEVETEMN) are excised as a propeptide. Residues 40–82 (EGVRCTGQHASSFCLNGGTCRHIASLGEYYCICPGDYTGHRCD) form the EGF-like domain. Intrachain disulfides connect cysteine 44-cysteine 59, cysteine 53-cysteine 70, and cysteine 72-cysteine 81.

This sequence belongs to the EGF domain peptide family.

It is found in the secreted. It localises to the nematocyst. Functionally, has both toxic and EGF activity. Its EGF activity consists of rounding cells (morphological change) and inducing tyrosine phosphorylation of the EGFR in A431 cells, but with a lower potency that human EGF. The chain is OMEGA-stichotoxin-Shd4a from Stichodactyla haddoni (Saddle carpet anemone).